The primary structure comprises 113 residues: Urease subunit beta (113 aa).

It belongs to the urease beta subunit family. Heterotrimer of UreA (gamma), UreB (beta) and UreC (alpha) subunits. Three heterotrimers associate to form the active enzyme.

Its subcellular location is the cytoplasm. It catalyses the reaction urea + 2 H2O + H(+) = hydrogencarbonate + 2 NH4(+). The protein operates within nitrogen metabolism; urea degradation; CO(2) and NH(3) from urea (urease route): step 1/1. The sequence is that of Urease subunit beta from Nitrosospira multiformis (strain ATCC 25196 / NCIMB 11849 / C 71).